Reading from the N-terminus, the 115-residue chain is Kunitz-type trypsin inhibitor 1 (115 aa).

This sequence belongs to the protease inhibitor I3 (leguminous Kunitz-type inhibitor) family.

Functionally, exhibits Kunitz trypsin protease inhibitor activity. The polypeptide is Kunitz-type trypsin inhibitor 1 (Selenicereus undatus (Pitahaya)).